The primary structure comprises 357 residues: MDRYGHNVRSDIKKQGYEDSNLPILCETCLGENPYVRIIREENGKECKICKNVFTHFRWKPGENSRYKQTVICMKCAKVKNVCQTCLFDLQYNLPVQVRDKFLENSIVLPENETNRNFFLEQMENDMSSTYDKMNRINMDLSKLKRRDPYFKRNMARVCSFWRKNSCNRGDECPYLHKEIHLDKSLSNQNIKNRYTGENDILAEKILLKHNEKNNDDKNMSNKICIQGISESVSQANIKECFKKFGDIKSIKVIPKDSKMFISYSNSQAAKKASDKYKDGLLLNGCNLTVHLQDNPTYNNKNQQPVINYMNNNMYQNNMSPQMMYNPMYYPYYNMNNMHPSSAPYSSMLPSEAEQRK.

The C3H1-type zinc-finger motif lies at 153–180; sequence RNMARVCSFWRKNSCNRGDECPYLHKEI. The 74-residue stretch at 222-295 folds into the RRM domain; it reads NKICIQGISE…CNLTVHLQDN (74 aa).

This sequence belongs to the SLT11 family. In terms of assembly, probable component of the spliceosome C complex.

The protein localises to the nucleus. Functionally, involved in pre-mRNA splicing. Binds RNA. The polypeptide is Pre-mRNA-splicing factor RBM22 homolog (Plasmodium falciparum (isolate 3D7)).